Consider the following 283-residue polypeptide: Orotidine 5'-phosphate decarboxylase (283 aa).

The active-site Proton donor is Lys97.

It belongs to the OMP decarboxylase family. Type 2 subfamily.

It catalyses the reaction orotidine 5'-phosphate + H(+) = UMP + CO2. Its pathway is pyrimidine metabolism; UMP biosynthesis via de novo pathway; UMP from orotate: step 2/2. This chain is Orotidine 5'-phosphate decarboxylase, found in Clostridium botulinum (strain Loch Maree / Type A3).